A 161-amino-acid chain; its full sequence is 2-C-methyl-D-erythritol 2,4-cyclodiphosphate synthase (161 aa).

The a divalent metal cation site is built by aspartate 10 and histidine 12. Residues 10–12 and 36–37 each bind 4-CDP-2-C-methyl-D-erythritol 2-phosphate; these read DVH and HS. Histidine 44 provides a ligand contact to a divalent metal cation. 4-CDP-2-C-methyl-D-erythritol 2-phosphate is bound by residues 58–60, 63–67, 102–108, 134–137, phenylalanine 141, and arginine 144; these read DIG, FPDTD, AQAPKML, and TTTE.

The protein belongs to the IspF family. In terms of assembly, homotrimer. A divalent metal cation is required as a cofactor.

The catalysed reaction is 4-CDP-2-C-methyl-D-erythritol 2-phosphate = 2-C-methyl-D-erythritol 2,4-cyclic diphosphate + CMP. It functions in the pathway isoprenoid biosynthesis; isopentenyl diphosphate biosynthesis via DXP pathway; isopentenyl diphosphate from 1-deoxy-D-xylulose 5-phosphate: step 4/6. Functionally, involved in the biosynthesis of isopentenyl diphosphate (IPP) and dimethylallyl diphosphate (DMAPP), two major building blocks of isoprenoid compounds. Catalyzes the conversion of 4-diphosphocytidyl-2-C-methyl-D-erythritol 2-phosphate (CDP-ME2P) to 2-C-methyl-D-erythritol 2,4-cyclodiphosphate (ME-CPP) with a corresponding release of cytidine 5-monophosphate (CMP). This is 2-C-methyl-D-erythritol 2,4-cyclodiphosphate synthase from Shewanella loihica (strain ATCC BAA-1088 / PV-4).